Consider the following 446-residue polypeptide: MENIADLWNSALTELEKKVSKPSYETWLKSTKAHALKKDTLTIIAPNEFARDWLESHYSELISETIYDITGAKLNIRFIIPQSQTEEEVDYPPAKAKKMNDESNHLPQSMLNPKYTFDTFVIGSGNRFAHAASLAVAEAPAKAYNPLFIYGGVGLGKTHLMHAIGHYVIEHNPNAKVVYLSSEKFTNEFINSIRDNKAVDFRNKYRNVDVLLIDDIQFLAGKEQTQEEFFHTFNALHEESKQIVISSDRPPKEIPTLEDRLRSRFEWGLITDITPPDLETRIAILRKKAKAEGLDIPNEVMIYIANQIDSNIRELEGALIRVVAYSSLINKDINADLAAEALKDIIPNSKPKIISIYDIQKAVGDVYQVKLEDFKAKKRTKSVAFPRQIAMYLSRELTDSSLPKIGEEFGGRDHTTVIHAHEKISRLLKTDTQLQKQIEEINDILK.

The domain I, interacts with DnaA modulators stretch occupies residues 1–81; it reads MENIADLWNS…AKLNIRFIIP (81 aa). Positions 81–109 are domain II; the sequence is PQSQTEEEVDYPPAKAKKMNDESNHLPQS. The tract at residues 110–326 is domain III, AAA+ region; that stretch reads MLNPKYTFDT…GALIRVVAYS (217 aa). ATP contacts are provided by Gly154, Gly156, Lys157, and Thr158. Positions 327–446 are domain IV, binds dsDNA; that stretch reads SLINKDINAD…QIEEINDILK (120 aa).

This sequence belongs to the DnaA family. Oligomerizes as a right-handed, spiral filament on DNA at oriC.

It is found in the cytoplasm. In terms of biological role, plays an essential role in the initiation and regulation of chromosomal replication. ATP-DnaA binds to the origin of replication (oriC) to initiate formation of the DNA replication initiation complex once per cell cycle. Binds the DnaA box (a 9 base pair repeat at the origin) and separates the double-stranded (ds)DNA. Forms a right-handed helical filament on oriC DNA; dsDNA binds to the exterior of the filament while single-stranded (ss)DNA is stabiized in the filament's interior. The ATP-DnaA-oriC complex binds and stabilizes one strand of the AT-rich DNA unwinding element (DUE), permitting loading of DNA polymerase. After initiation quickly degrades to an ADP-DnaA complex that is not apt for DNA replication. Binds acidic phospholipids. The chain is Chromosomal replication initiator protein DnaA from Bacillus cytotoxicus (strain DSM 22905 / CIP 110041 / 391-98 / NVH 391-98).